The following is a 176-amino-acid chain: Large ribosomal subunit protein uL15 (176 aa).

The span at 1-13 shows a compositional bias: basic and acidic residues; sequence MKLNDLRDNEGAR. Disordered stretches follow at residues 1–48 and 151–176; these read MKLN…AIKG and IPAA…AKAE. Gly residues predominate over residues 21–35; sequence RGIGSGKGKTGGRGQ. The span at 156 to 176 shows a compositional bias: basic and acidic residues; the sequence is PEHEKKAARSEANKKAKAKAE.

Belongs to the universal ribosomal protein uL15 family. In terms of assembly, part of the 50S ribosomal subunit.

In terms of biological role, binds to the 23S rRNA. The sequence is that of Large ribosomal subunit protein uL15 from Erythrobacter litoralis (strain HTCC2594).